Here is a 69-residue protein sequence, read N- to C-terminus: Large ribosomal subunit protein uL29 (69 aa).

This sequence belongs to the universal ribosomal protein uL29 family.

This Staphylococcus saprophyticus subsp. saprophyticus (strain ATCC 15305 / DSM 20229 / NCIMB 8711 / NCTC 7292 / S-41) protein is Large ribosomal subunit protein uL29.